An 80-amino-acid chain; its full sequence is Sec-independent protein translocase protein TatA (80 aa).

Residues 1 to 21 (MGISMWQLLIVLLIIVLLFGT) form a helical membrane-spanning segment. The segment at 39–80 (KKAMSDGESEEDKEPKKLSQNESRTIEGSVERNDAKTESKHS) is disordered. The segment covering 67–80 (SVERNDAKTESKHS) has biased composition (basic and acidic residues).

The protein belongs to the TatA/E family. As to quaternary structure, the Tat system comprises two distinct complexes: a TatABC complex, containing multiple copies of TatA, TatB and TatC subunits, and a separate TatA complex, containing only TatA subunits. Substrates initially bind to the TatABC complex, which probably triggers association of the separate TatA complex to form the active translocon.

It localises to the cell inner membrane. In terms of biological role, part of the twin-arginine translocation (Tat) system that transports large folded proteins containing a characteristic twin-arginine motif in their signal peptide across membranes. TatA could form the protein-conducting channel of the Tat system. The polypeptide is Sec-independent protein translocase protein TatA (Hahella chejuensis (strain KCTC 2396)).